The primary structure comprises 89 residues: Small ribosomal subunit protein uS19 (89 aa).

The protein belongs to the universal ribosomal protein uS19 family.

Functionally, protein S19 forms a complex with S13 that binds strongly to the 16S ribosomal RNA. In Stenotrophomonas maltophilia (strain K279a), this protein is Small ribosomal subunit protein uS19.